The primary structure comprises 257 residues: Type III pantothenate kinase (257 aa).

Residue 24–31 (MIGNSRLH) coordinates ATP. Substrate-binding positions include Tyr-96 and 100–103 (GIDR). The Proton acceptor role is filled by Asp-102. Residue Asp-122 participates in K(+) binding. Thr-125 contacts ATP. Residue Thr-180 coordinates substrate.

It belongs to the type III pantothenate kinase family. In terms of assembly, homodimer. It depends on NH4(+) as a cofactor. K(+) serves as cofactor.

The protein localises to the cytoplasm. It carries out the reaction (R)-pantothenate + ATP = (R)-4'-phosphopantothenate + ADP + H(+). Its pathway is cofactor biosynthesis; coenzyme A biosynthesis; CoA from (R)-pantothenate: step 1/5. Functionally, catalyzes the phosphorylation of pantothenate (Pan), the first step in CoA biosynthesis. In Synechocystis sp. (strain ATCC 27184 / PCC 6803 / Kazusa), this protein is Type III pantothenate kinase.